The sequence spans 646 residues: Long-chain fatty acid transport protein 1 (646 aa).

The Extracellular segment spans residues 1–13 (MRTPGAGTASVAS). A helical membrane pass occupies residues 14 to 34 (LGLLWLLGLPWTWSAAAAFGV). Over 35-646 (YVGSGGWRFL…ARICAGDFSL (612 aa)) the chain is Cytoplasmic. The tract at residues 191–475 (EVSEQLGKSL…YVSDSATNKK (285 aa)) is sufficient for oligomerization. 246 to 257 (YIYTSGTTGLPK) lines the AMP pocket.

The protein belongs to the ATP-dependent AMP-binding enzyme family. As to quaternary structure, self-associates. May function as a homodimer. Interacts with EPRS1; mediates the translocation of SLC27A1 from the cytoplasm to the plasma membrane thereby increasing the uptake of long-chain fatty acids. Interacts with DGAT2 and this interaction is enhanced in the presence of ZFYVE1. In terms of tissue distribution, expressed in muscle.

The protein localises to the cell membrane. The protein resides in the endomembrane system. Its subcellular location is the cytoplasm. It catalyses the reaction a fatty acid(in) = a fatty acid(out). It carries out the reaction (9Z)-octadecenoate(out) = (9Z)-octadecenoate(in). The enzyme catalyses hexadecanoate(out) = hexadecanoate(in). The catalysed reaction is (5Z,8Z,11Z,14Z)-eicosatetraenoate(out) = (5Z,8Z,11Z,14Z)-eicosatetraenoate(in). It catalyses the reaction (9Z,12Z)-octadecadienoate(out) = (9Z,12Z)-octadecadienoate(in). It carries out the reaction a long-chain fatty acid + ATP + CoA = a long-chain fatty acyl-CoA + AMP + diphosphate. The enzyme catalyses (5Z,8Z,11Z,14Z)-eicosatetraenoate + ATP + CoA = (5Z,8Z,11Z,14Z)-eicosatetraenoyl-CoA + AMP + diphosphate. The catalysed reaction is a very long-chain fatty acid + ATP + CoA = a very long-chain fatty acyl-CoA + AMP + diphosphate. It catalyses the reaction tetracosanoate + ATP + CoA = tetracosanoyl-CoA + AMP + diphosphate. Its activity is regulated as follows. Inhibited by Triacsin C. Mediates the import of long-chain fatty acids (LCFA) into the cell by facilitating their transport at the plasma membrane. Also functions as an acyl-CoA ligase catalyzing the ATP-dependent formation of fatty acyl-CoA using LCFA and very-long-chain fatty acids (VLCFA) as substrates, which prevents fatty acid efflux from cells and might drive more fatty acid uptake. May act directly as a bona fide transporter, or alternatively, in a cytoplasmic or membrane-associated multimeric protein complex to trap and draw fatty acids towards accumulation. Plays a pivotal role in regulating available LCFA substrates from exogenous sources in tissues undergoing high levels of beta-oxidation or triglyceride synthesis. May be involved in regulation of cholesterol metabolism. Probably involved in fatty acid transport across the blood barrier. This is Long-chain fatty acid transport protein 1 from Rattus norvegicus (Rat).